Here is a 286-residue protein sequence, read N- to C-terminus: Energy-coupling factor transporter ATP-binding protein EcfA2 (286 aa).

The 244-residue stretch at 3 to 246 (IRFDNVSYTY…KEKLADWHIG (244 aa)) folds into the ABC transporter domain. An ATP-binding site is contributed by 40 to 47 (GQTGSGKS).

This sequence belongs to the ABC transporter superfamily. Energy-coupling factor EcfA family. Forms a stable energy-coupling factor (ECF) transporter complex composed of 2 membrane-embedded substrate-binding proteins (S component), 2 ATP-binding proteins (A component) and 2 transmembrane proteins (T component).

The protein localises to the cell membrane. ATP-binding (A) component of a common energy-coupling factor (ECF) ABC-transporter complex. Unlike classic ABC transporters this ECF transporter provides the energy necessary to transport a number of different substrates. In Staphylococcus aureus (strain MRSA252), this protein is Energy-coupling factor transporter ATP-binding protein EcfA2.